A 510-amino-acid chain; its full sequence is Transcriptional regulatory protein GAT1 (510 aa).

The residue at position 167 (S167) is a Phosphoserine. The span at 220–256 (NHSHNSSHNNNSPSIANNTNANTNTNTSASTNTNSPL) shows a compositional bias: low complexity. 2 disordered regions span residues 220-311 (NHSH…IKCS) and 358-383 (QRSS…AAGK). S262 and S270 each carry phosphoserine. Over residues 274–287 (SSVRKKKPALKKIK) the composition is skewed to basic residues. The span at 294–306 (SSATPPSNTSSNP) shows a compositional bias: low complexity. The segment at 310 to 334 (CSNCTTSTTPLWRKDPKGLPLCNAC) adopts a GATA-type zinc-finger fold. Phosphothreonine is present on T369. 2 positions are modified to phosphoserine: S399 and S418.

The protein localises to the nucleus. Positive regulator of multiple nitrogen catabolic genes. This is Transcriptional regulatory protein GAT1 (GAT1) from Saccharomyces cerevisiae (strain ATCC 204508 / S288c) (Baker's yeast).